The primary structure comprises 337 residues: ATP-dependent 6-phosphofructokinase (337 aa).

Glycine 11 contacts ATP. 21 to 25 (RAVVR) provides a ligand contact to ADP. ATP is bound by residues 72–73 (RY) and 102–105 (GDGS). Residue aspartate 103 participates in Mg(2+) binding. 125–127 (TID) is a substrate binding site. Residue aspartate 127 is the Proton acceptor of the active site. Arginine 154 provides a ligand contact to ADP. Residues arginine 162 and 169-171 (MGR) contribute to the substrate site. Residues 185 to 187 (GAD), arginine 212, and 214 to 216 (KNH) contribute to the ADP site. Substrate-binding positions include glutamate 223, arginine 245, and 251–254 (HILR).

The protein belongs to the phosphofructokinase type A (PFKA) family. ATP-dependent PFK group I subfamily. Prokaryotic clade 'B1' sub-subfamily. Homotetramer. Mg(2+) serves as cofactor.

The protein localises to the cytoplasm. It carries out the reaction beta-D-fructose 6-phosphate + ATP = beta-D-fructose 1,6-bisphosphate + ADP + H(+). It participates in carbohydrate degradation; glycolysis; D-glyceraldehyde 3-phosphate and glycerone phosphate from D-glucose: step 3/4. With respect to regulation, allosterically activated by ADP and other diphosphonucleosides, and allosterically inhibited by phosphoenolpyruvate. In terms of biological role, catalyzes the phosphorylation of D-fructose 6-phosphate to fructose 1,6-bisphosphate by ATP, the first committing step of glycolysis. This chain is ATP-dependent 6-phosphofructokinase, found in Streptococcus equi subsp. equi (strain 4047).